Here is a 373-residue protein sequence, read N- to C-terminus: Protein U3 (373 aa).

It belongs to the herpesviridae US22 family.

The sequence is that of Protein U3 (U3) from Human herpesvirus 6A (strain Uganda-1102) (HHV-6 variant A).